The sequence spans 97 residues: Kunitz-type trypsin inhibitor 1 (97 aa).

The protein belongs to the protease inhibitor I3 (leguminous Kunitz-type inhibitor) family.

Functionally, exhibits Kunitz trypsin protease inhibitor activity. In Selenicereus costaricensis (Red-fleshed dragon fruit), this protein is Kunitz-type trypsin inhibitor 1.